Consider the following 245-residue polypeptide: tRNA1(Val) (adenine(37)-N6)-methyltransferase (245 aa).

Belongs to the methyltransferase superfamily. tRNA (adenine-N(6)-)-methyltransferase family.

Its subcellular location is the cytoplasm. The catalysed reaction is adenosine(37) in tRNA1(Val) + S-adenosyl-L-methionine = N(6)-methyladenosine(37) in tRNA1(Val) + S-adenosyl-L-homocysteine + H(+). In terms of biological role, specifically methylates the adenine in position 37 of tRNA(1)(Val) (anticodon cmo5UAC). The protein is tRNA1(Val) (adenine(37)-N6)-methyltransferase of Escherichia coli O157:H7.